The chain runs to 208 residues: ATP-dependent Clp protease proteolytic subunit (208 aa).

Ser107 (nucleophile) is an active-site residue. His132 is a catalytic residue.

This sequence belongs to the peptidase S14 family. As to quaternary structure, fourteen ClpP subunits assemble into 2 heptameric rings which stack back to back to give a disk-like structure with a central cavity, resembling the structure of eukaryotic proteasomes.

Its subcellular location is the cytoplasm. The enzyme catalyses Hydrolysis of proteins to small peptides in the presence of ATP and magnesium. alpha-casein is the usual test substrate. In the absence of ATP, only oligopeptides shorter than five residues are hydrolyzed (such as succinyl-Leu-Tyr-|-NHMec, and Leu-Tyr-Leu-|-Tyr-Trp, in which cleavage of the -Tyr-|-Leu- and -Tyr-|-Trp bonds also occurs).. Functionally, cleaves peptides in various proteins in a process that requires ATP hydrolysis. Has a chymotrypsin-like activity. Plays a major role in the degradation of misfolded proteins. In Jannaschia sp. (strain CCS1), this protein is ATP-dependent Clp protease proteolytic subunit.